The primary structure comprises 574 residues: DNA mismatch repair protein MutL (574 aa).

Belongs to the DNA mismatch repair MutL/HexB family.

Functionally, this protein is involved in the repair of mismatches in DNA. It is required for dam-dependent methyl-directed DNA mismatch repair. May act as a 'molecular matchmaker', a protein that promotes the formation of a stable complex between two or more DNA-binding proteins in an ATP-dependent manner without itself being part of a final effector complex. This is DNA mismatch repair protein MutL from Coxiella burnetii (strain RSA 331 / Henzerling II).